Here is a 316-residue protein sequence, read N- to C-terminus: Large ribosomal subunit protein uL4 (316 aa).

The large ribosomal subunit protein uL4 stretch occupies residues 1–211; it reads MASCVVKNWQ…EQLKARWGSD (211 aa). Disordered regions lie at residues 44-76 and 231-316; these read ARQG…ARAG and EDQA…ESDD. Positions 60–71 are enriched in basic residues; that stretch reads GGRKPWKQKGTG. The interval 212 to 316 is unknown; it reads AAPAVLETPS…TAPAEEESDD (105 aa). Residues 255–270 show a composition bias toward low complexity; sequence QTPAQPEAQENQAALQ. Composition is skewed to acidic residues over residues 281–291 and 301–316; these read EQTEEPQDPAE and TVEE…ESDD.

The protein belongs to the universal ribosomal protein uL4 family. As to quaternary structure, part of the 50S ribosomal subunit.

In terms of biological role, one of the primary rRNA binding proteins, this protein initially binds near the 5'-end of the 23S rRNA. It is important during the early stages of 50S assembly. It makes multiple contacts with different domains of the 23S rRNA in the assembled 50S subunit and ribosome. Its function is as follows. Forms part of the polypeptide exit tunnel. In Synechococcus sp. (strain JA-2-3B'a(2-13)) (Cyanobacteria bacterium Yellowstone B-Prime), this protein is Large ribosomal subunit protein uL4.